The primary structure comprises 184 residues: Protein DP71L (184 aa).

The segment covering 1 to 15 has biased composition (basic residues); the sequence is MSRRNKRSRRRRKKP. Residues 1–41 form a disordered region; it reads MSRRNKRSRRRRKKPLNTIQPGPSKPSAQDEPIKSVSHHSS. Important for host CHOP inhibition stretches follow at residues 125–127 and 169–173; these read VYF and LSAVL.

This sequence belongs to the asfivirus DP71L family. As to quaternary structure, interacts (via C-terminus) with host PPP1CB.

Functionally, interacts with the host phosphatase PP1 catalytic subunit (PPP1CB) and recruits it to dephosphorylate EIF2S1/eIF2alpha and therefore restores the host translation that has been shut-down by the host. Also inhibits the EIF2S1/eIF2alpha-ATF4-DDIT3/CHOP pathway. The chain is Protein DP71L from Ornithodoros (relapsing fever ticks).